The primary structure comprises 234 residues: Preflagellin peptidase (234 aa).

Position 1 (M1) is a topological domain, cytoplasmic. Residues 2–18 (INFIVGAIGLLIASIYD) form a helical membrane-spanning segment. The Extracellular portion of the chain corresponds to 19–23 (LKSRE). The helical transmembrane segment at 24–46 (IEDYVWVSMVIFGLIYNGYLSFI) threads the bilayer. Residues 47 to 49 (SHD) lie on the Cytoplasmic side of the membrane. Residues 50-72 (MLYVIQSIVGFIVCFFLGFFMFL) traverse the membrane as a helical segment. The Extracellular segment spans residues 73–78 (LGVGGG). The chain crosses the membrane as a helical span at residues 79 to 89 (DGKLIMGLGAL). Residues 90-110 (IPKYNMPIHTPLGAILNYLYL) are Cytoplasmic-facing. A helical membrane pass occupies residues 111 to 139 (PSFPIMVVINAMFFSITLPIIIFLRNVIR). Residues 140 to 205 (GVKPKTKKEV…EEIWVTPAIP (66 aa)) are Extracellular-facing. A helical membrane pass occupies residues 206-217 (FVVPIFLSYLLT). Residues 218–234 (SIIGDKIIGIFLSVFGL) lie on the Cytoplasmic side of the membrane.

The protein belongs to the peptidase A24 family. Archaeal preflagellin peptidase subfamily.

The protein localises to the cell membrane. The catalysed reaction is Cleaves the signal peptide of 3 to 12 amino acids from the N-terminal of preflagellin, usually at Arg-Gly-|- or Lys-Gly-|-, to release flagellin.. In terms of biological role, cleaves the N-terminal leader peptide from preflagellins. The chain is Preflagellin peptidase (flaK) from Methanocaldococcus jannaschii (strain ATCC 43067 / DSM 2661 / JAL-1 / JCM 10045 / NBRC 100440) (Methanococcus jannaschii).